We begin with the raw amino-acid sequence, 293 residues long: NAD kinase (293 aa).

D73 functions as the Proton acceptor in the catalytic mechanism. NAD(+) is bound by residues 73–74 (DG), H78, 147–148 (ND), R158, R175, D177, 188–193 (TAYALS), and Q248.

Belongs to the NAD kinase family. The cofactor is a divalent metal cation.

The protein localises to the cytoplasm. The catalysed reaction is NAD(+) + ATP = ADP + NADP(+) + H(+). Involved in the regulation of the intracellular balance of NAD and NADP, and is a key enzyme in the biosynthesis of NADP. Catalyzes specifically the phosphorylation on 2'-hydroxyl of the adenosine moiety of NAD to yield NADP. The polypeptide is NAD kinase (Nitrosococcus oceani (strain ATCC 19707 / BCRC 17464 / JCM 30415 / NCIMB 11848 / C-107)).